The following is a 999-amino-acid chain: Sarcoplasmic/endoplasmic reticulum calcium ATPase 3 (999 aa).

M1 carries the N-acetylmethionine modification. Residues 1–48 (MEEAHLLPAADVLRRFSVTAEGGLSPAQVTRARERYGPNELPTEEGKS) lie on the Cytoplasmic side of the membrane. The residue at position 17 (S17) is a Phosphoserine. T19 carries the post-translational modification Phosphothreonine. Phosphoserine is present on S25. A helical transmembrane segment spans residues 49–69 (LWELVLEQFEDLLVRILLLAA). The Extracellular segment spans residues 70 to 89 (LVSFVLACFEEGEETTTAFV). Residues 90–110 (EPLVIVLILVANAVVGVWQER) traverse the membrane as a helical segment. Over 111–253 (NAENAIEALK…PERTPLQQKL (143 aa)) the chain is Cytoplasmic. Residues 254-273 (DEFGRQLSRAISVICMAVWV) form a helical membrane-spanning segment. Topologically, residues 274–295 (INIGHFADPAHGGSWLRGAVYY) are extracellular. A helical membrane pass occupies residues 296–313 (FKIAVALAVAAIPEGLPA). Positions 304, 305, 307, and 309 each coordinate Ca(2+). Residues 314-757 (VITTCLALGT…EEGRAIYSNM (444 aa)) are Cytoplasmic-facing. D351 functions as the 4-aspartylphosphate intermediate in the catalytic mechanism. Mg(2+) is bound by residues D351 and T353. T353 is an ATP binding site. Residues 370-400 (AEAEAGTCRLHEFTISGTTYAPEGEVRQGEQ) form an interaction with phospholamban 1 region. T415 is modified (phosphothreonine). ATP-binding residues include E442, R489, K515, R560, T625, G626, and D627. The residue at position 662 (S662) is a Phosphoserine. Positions 678 and 684 each coordinate ATP. Mg(2+) is bound at residue D703. ATP is bound at residue N706. A helical membrane pass occupies residues 758-777 (KQFIRYLISSNVGEVVCIFL). N768 and E771 together coordinate Ca(2+). The Extracellular portion of the chain corresponds to 778–787 (TAILGLPEAL). Residues 788–808 (IPVQLLWVNLVTDGLPATALG) form a helical membrane-spanning segment. Positions 788–808 (IPVQLLWVNLVTDGLPATALG) are interaction with phospholamban 2. N796, T799, and D800 together coordinate Ca(2+). At 809 to 828 (FNPPDLDIMEKRPRNPREAL) the chain is on the cytoplasmic side. Residues 829–851 (ISGWLFFRYLAIGVYVGLATVAA) form a helical membrane-spanning segment. The Extracellular portion of the chain corresponds to 852–897 (ATWWFLYDAEGPQVTFYQLRNFLKCSEDNPLFTGTDCEVFESRFPT). A disulfide bridge connects residues C876 and C888. The chain crosses the membrane as a helical span at residues 898 to 917 (TMALSVLVTTEMCNALNSVS). E908 contributes to the Ca(2+) binding site. Topologically, residues 918-930 (ENQSLLRMPPWLN) are cytoplasmic. The helical transmembrane segment at 931 to 949 (PWLLAAVAMSMALHFLILL) threads the bilayer. Residues 950–964 (VPPLPLIFQVTPLSG) are Extracellular-facing. A helical transmembrane segment spans residues 965–985 (RQWVVVLQISLPVILLDEALK). Topologically, residues 986 to 999 (YLSRKHVDEEKGRQ) are cytoplasmic.

It belongs to the cation transport ATPase (P-type) (TC 3.A.3) family. Type IIA subfamily. As to quaternary structure, interacts with sarcolipin (SLN). Interacts with phospholamban (PLN). Interacts with myoregulin (MRLN). Interacts with DWORF. Interacts with VMP1. Interacts with TUNAR; the interaction occurs at low levels in low glucose conditions and is increased by high glucose levels. Mg(2+) is required as a cofactor. As to expression, expressed in endothelial tissues.

The protein localises to the endoplasmic reticulum membrane. Its subcellular location is the sarcoplasmic reticulum membrane. The catalysed reaction is Ca(2+)(in) + ATP + H2O = Ca(2+)(out) + ADP + phosphate + H(+). With respect to regulation, inhibited by sarcolipin (SLN), phospholamban (PLN) and myoregulin (MRLN). Enhanced by DWORF; DWORF increases activity by displacing sarcolipin (SLN), phospholamban (PLN) and myoregulin (MRLN). Functionally, this magnesium-dependent enzyme catalyzes the hydrolysis of ATP coupled with the transport of calcium. Transports calcium ions from the cytosol into the sarcoplasmic/endoplasmic reticulum lumen. Contributes to calcium sequestration involved in muscular excitation/contraction. In Sus scrofa (Pig), this protein is Sarcoplasmic/endoplasmic reticulum calcium ATPase 3 (ATP2A3).